The following is a 411-amino-acid chain: Zinc finger protein draculin (411 aa).

Positions 1-33 (MKNTTKPCRTEHHNAEGQRDRMEGNKKGETKAK) are disordered. Positions 8 to 32 (CRTEHHNAEGQRDRMEGNKKGETKA) are enriched in basic and acidic residues. C2H2-type zinc fingers lie at residues 36 to 58 (VACSHCKKRFSHKAHLQIHMRVH), 64 to 86 (YRCDQCGKCFPYKQSLKLHLDIH), 92 to 114 (YTCDECGESFKTRLQLRSHMTLH), 120 to 142 (YKCDQCEKSYGREDHLQRHMKLH), 148 to 170 (HKCEHCGKSFPMRDLLRSHLMVH), 176 to 198 (YTCDQCGKGFTLKKSYNEHMNIH), 204 to 226 (YTCDQCGKGFPYEQSLNLHMRFH), 232 to 254 (FTCDQCGQSFSQKGAYNIHMKIH), 260 to 282 (YTCDQCGMSFRHGYSLKLHMTHH), 288 to 310 (FHCDQCDKCYSTALFLKNHIKTH), 316 to 338 (YSCLTCGKTFNQLRGLRLHEKRH), 344 to 366 (FMCFDCGKCYFTDTELKQHLPVH), and 372 to 394 (YMCSLCFKSFPRMGSLIVHEKTH).

Specifically expressed in the hematopoietic lineage during embryogenesis; first expressed at the late blastula stage around the blastoderm margin. During gastrulation, restricted to the ventral mesoderm, the presumptive prechordal plate and the dorso-marginal cells of the organizer. At the 3-somite stage, strongly expressed in a caudal domain (marking the erythroid lineage) and a cephalic domain of the lateral mesoderm. At the 8- to 10-somite stage, caudal expression is in two bands of lateral mesoderm which later converge at the midline. Anterior expression is also in two bands of lateral mesoderm which converge as two patches at the midline by the 15-somite stage, with increased scattering of single cells (macrophage precursors) away from the midline to the yolksac. Once at the yolksac, expression is lost. By 20-24 hours post-fertilization (hpf), expressed in proerythroblasts in the erythroid blood island centered above the uro-genital opening. Expression persists in circulating erythroblasts but is lost in mature erythrocytes.

The protein is Zinc finger protein draculin of Danio rerio (Zebrafish).